The sequence spans 202 residues: Probable nicotinate-nucleotide adenylyltransferase (202 aa).

Belongs to the NadD family.

The enzyme catalyses nicotinate beta-D-ribonucleotide + ATP + H(+) = deamido-NAD(+) + diphosphate. Its pathway is cofactor biosynthesis; NAD(+) biosynthesis; deamido-NAD(+) from nicotinate D-ribonucleotide: step 1/1. Catalyzes the reversible adenylation of nicotinate mononucleotide (NaMN) to nicotinic acid adenine dinucleotide (NaAD). The protein is Probable nicotinate-nucleotide adenylyltransferase of Clostridium perfringens (strain ATCC 13124 / DSM 756 / JCM 1290 / NCIMB 6125 / NCTC 8237 / Type A).